The chain runs to 1334 residues: Adenylate cyclase type 9 (1334 aa).

Disordered regions lie at residues 1–28 (MASP…SNSV) and 49–71 (ISSS…GLRR). Residues 1-113 (MASPPHQQLL…CFPQTQRRFR (113 aa)) are Cytoplasmic-facing. Residues 16 to 28 (EVSCDSSGDSNSV) show a composition bias toward polar residues. Gly residues predominate over residues 57–69 (ESGGVGRGGGGGL). Residues 114 to 134 (YALFYIGSACLLWGIYFGVHM) form a helical membrane-spanning segment. Residues 135–137 (REK) lie on the Extracellular side of the membrane. Residues 138-158 (QMVFMVPALCFLLVCVAFFAF) form a helical membrane-spanning segment. Residues 159 to 167 (TFTKAYARR) are Cytoplasmic-facing. A helical membrane pass occupies residues 168-187 (YVWTSGYTLLVFALTLAPQF). At 188–207 (QPWTLGERQRVQPRPAAPVD) the chain is on the extracellular side. Residues 208–227 (TCLSQVGSFSMCVEVLLLLY) form a helical membrane-spanning segment. The Cytoplasmic portion of the chain corresponds to 228–233 (TVMHLP). A helical transmembrane segment spans residues 234–250 (LYLSLFLGLSYSVLFET). Topologically, residues 251–269 (SAFRDESCTLLGGGAVYWE) are extracellular. Residues 270–290 (LLSKAFLHVCIHAIGIHLFIM) form a helical membrane-spanning segment. The Cytoplasmic segment spans residues 291 to 768 (SEVRSRSTFL…VKTFASATFS (478 aa)). The tract at residues 338-363 (QGDDESENSVKRHSTSSPKNRKKKPS) is disordered. Residues 348 to 363 (KRHSTSSPKNRKKKPS) show a composition bias toward basic residues. Mg(2+) is bound by residues Asp388, Ile389, and Asp432. Residues 388 to 393 (DIVGFT), 430 to 432 (LGD), and Arg476 each bind ATP. The disordered stretch occupies residues 635–670 (GCQDEHKNSTKAPGGHSPKTQNGLLSPPQEEKLSNS). A helical transmembrane segment spans residues 769–789 (SLLDVFLSTTVFLILSVTCFL). The Extracellular portion of the chain corresponds to 790 to 800 (KHGMVASPPPP). Residues 801–821 (AAVVVFVIAILLEVLSLVISV) traverse the membrane as a helical segment. At 822–849 (RMVFFLEEVMACTKRLLELISGWLPRHF) the chain is on the cytoplasmic side. The helical transmembrane segment at 850-870 (LGAILVSLPALAVFSHFTSDF) threads the bilayer. Topologically, residues 871-873 (ETN) are extracellular. The chain crosses the membrane as a helical span at residues 874 to 894 (IHYTMFMCCAILIAIVQYCNF). Residues 895-902 (CQLSSWMR) are Cytoplasmic-facing. The helical transmembrane segment at 903–923 (SLLATVVGAVLLILLYVSLCP) threads the bilayer. At 924-957 (DSSVETLHLDLAQNLSSRKSPCNSSMPADVKRPA) the chain is on the extracellular side. N-linked (GlcNAc...) asparagine glycans are attached at residues Asn937 and Asn946. Residues 958 to 978 (DLIGQEVILAVFLLLLLVWFL) form a helical membrane-spanning segment. The Cytoplasmic segment spans residues 979-1334 (NRSFEVSYRL…LTKLNVSKSV (356 aa)). Residues Lys1090, 1167-1169 (DIW), 1174-1178 (NIASR), and Lys1214 contribute to the ATP site. Residues 1266 to 1303 (SVQNSDKTAHATDNSETKDALPSSKKLQKEPTKAEERC) form a disordered region. Composition is skewed to basic and acidic residues over residues 1272-1284 (KTAH…ETKD) and 1292-1303 (LQKEPTKAEERC).

This sequence belongs to the adenylyl cyclase class-4/guanylyl cyclase family. Requires Mg(2+) as cofactor. Mn(2+) is required as a cofactor. As to expression, detected in embryonic heart (at protein level).

It localises to the cell membrane. It is found in the membrane. The enzyme catalyses ATP = 3',5'-cyclic AMP + diphosphate. Its activity is regulated as follows. Insensitive to calcium/calmodulin, forskolin and somatostatin. Stimulated by beta-adrenergic receptor activation. Activity is down-regulated by calcium/calcineurin. Its function is as follows. Adenylyl cyclase that catalyzes the formation of the signaling molecule cAMP in response to activation of G protein-coupled receptors. The chain is Adenylate cyclase type 9 (ADCY9) from Gallus gallus (Chicken).